A 383-amino-acid chain; its full sequence is 8-amino-7-oxononanoate synthase (383 aa).

Residue Arg-23 coordinates substrate. 110-111 lines the pyridoxal 5'-phosphate pocket; it reads GF. His-135 serves as a coordination point for substrate. The pyridoxal 5'-phosphate site is built by Ser-181, His-209, and Thr-235. Lys-238 is subject to N6-(pyridoxal phosphate)lysine. Thr-351 contributes to the substrate binding site.

It belongs to the class-II pyridoxal-phosphate-dependent aminotransferase family. BioF subfamily. Homodimer. The cofactor is pyridoxal 5'-phosphate.

The catalysed reaction is 6-carboxyhexanoyl-[ACP] + L-alanine + H(+) = (8S)-8-amino-7-oxononanoate + holo-[ACP] + CO2. It functions in the pathway cofactor biosynthesis; biotin biosynthesis. Its function is as follows. Catalyzes the decarboxylative condensation of pimeloyl-[acyl-carrier protein] and L-alanine to produce 8-amino-7-oxononanoate (AON), [acyl-carrier protein], and carbon dioxide. This chain is 8-amino-7-oxononanoate synthase, found in Aliivibrio fischeri (strain ATCC 700601 / ES114) (Vibrio fischeri).